The following is a 502-amino-acid chain: Glycerol kinase (502 aa).

Thr-14 contributes to the ADP binding site. The ATP site is built by Thr-14, Thr-15, and Ser-16. Thr-14 provides a ligand contact to sn-glycerol 3-phosphate. Arg-18 is a binding site for ADP. Residues Arg-84, Glu-85, Tyr-136, and Asp-246 each contribute to the sn-glycerol 3-phosphate site. Glycerol contacts are provided by Arg-84, Glu-85, Tyr-136, Asp-246, and Gln-247. ADP contacts are provided by Thr-268 and Gly-311. Residues Thr-268, Gly-311, Gln-315, and Gly-412 each coordinate ATP. ADP is bound by residues Gly-412 and Asn-416.

This sequence belongs to the FGGY kinase family. In terms of assembly, homotetramer and homodimer (in equilibrium). Heterodimer with EIIA-Glc. Binds 1 zinc ion per glycerol kinase EIIA-Glc dimer. The zinc ion is important for dimerization.

It carries out the reaction glycerol + ATP = sn-glycerol 3-phosphate + ADP + H(+). It participates in polyol metabolism; glycerol degradation via glycerol kinase pathway; sn-glycerol 3-phosphate from glycerol: step 1/1. Activity of this regulatory enzyme is affected by several metabolites. Allosterically and non-competitively inhibited by fructose 1,6-bisphosphate (FBP) and unphosphorylated phosphocarrier protein EIIA-Glc (III-Glc), an integral component of the bacterial phosphotransferase (PTS) system. Its function is as follows. Key enzyme in the regulation of glycerol uptake and metabolism. Catalyzes the phosphorylation of glycerol to yield sn-glycerol 3-phosphate. This is Glycerol kinase from Escherichia coli O81 (strain ED1a).